The following is a 517-amino-acid chain: Benzoate 4-monooxygenase bphA (517 aa).

A helical transmembrane segment spans residues 4 to 24; that stretch reads LLLSPYGAYLGLALLVLYYLL. N-linked (GlcNAc...) asparagine glycosylation is found at Asn282 and Asn325. Cys461 contributes to the heme binding site.

Belongs to the cytochrome P450 family. Heme serves as cofactor.

It is found in the membrane. It catalyses the reaction benzoate + reduced [NADPH--hemoprotein reductase] + O2 = 4-hydroxybenzoate + oxidized [NADPH--hemoprotein reductase] + H2O + H(+). Cytochrome P450 monooxygenase; part of the benzoic acid degradation pathway also known as the protocatechuic acid pathway. Benzoic acid debradation begins with the conversion of benzoic acid into 4-hydroxybenzoic acid through hydroxylation by the benzoate-4-monooxygenase bphA, and its partner NADPH-cytochrome P450 reductase cprA which act as a mediator in electron donation from NADPH. 4-Hydroxybenzoic acid is then converted into 3,4-dihydroxybenzoic acid (also called protocatechuic acid) by the p-hydroxybenzoate-m-hydroxylase phhA. Protocatechuic acid is converted into 3-carboxy-cis,cis-muconic acid by the intradiol ring-cleavage dioxygenase prcA, which is further metabolized through the 3-oxoadipate pathway to finally enter the tricarboxylic acid cycle (TCA). In terms of biological role, responsible for cytochrome P450 dependent benzoate hydroxylation in microsomes; requires cprA as the mediator in electron donation from NADPH. The polypeptide is Benzoate 4-monooxygenase bphA (Aspergillus niger).